Reading from the N-terminus, the 234-residue chain is Uracil-DNA glycosylase (234 aa).

Residue Asp-68 is the Proton acceptor of the active site.

The protein belongs to the uracil-DNA glycosylase (UDG) superfamily. UNG family.

The protein localises to the cytoplasm. It carries out the reaction Hydrolyzes single-stranded DNA or mismatched double-stranded DNA and polynucleotides, releasing free uracil.. Its function is as follows. Excises uracil residues from the DNA which can arise as a result of misincorporation of dUMP residues by DNA polymerase or due to deamination of cytosine. The polypeptide is Uracil-DNA glycosylase (Ruegeria sp. (strain TM1040) (Silicibacter sp.)).